The following is an 896-amino-acid chain: MDGAAGPGDGPAREALQSLSQRLRVQEQEMELVKAALAEALRLLRLQVPPSSLQGSGTPAPPGDSLAAPPGLPPTCTPSLVSRGTQTETEVELKSSPGPPGLSNGPPAPQGASEEPSGTQSEGGGSSSSGAGSPGPPGILRPLQPPQRADTPRRNSSSSSSPSERPRQKLSRKAISSANLLVRSGSTESRGGKDPLSSPGGPGSRRSNYNLEGISVKMFLRGRPITMYIPSGIRSLEELPSGPPPETLSLDWVYGYRGRDSRSNLFVLRSGEVVYFIACVVVLYRPGGGPGGPGGGGQRHYRGHTDCVRCLAVHPDGVRVASGQTAGVDKDGKPLQPVVHIWDSETLLKLQEIGLGAFERGVGALAFSAADQGAFLCVVDDSNEHMLSVWDCSRGMKLAEIKSTNDSVLAVGFNPRDSSCIVTSGKSHVHFWNWSGGVGVPGNGTLTRKQGVFGKYKKPKFIPCFVFLPDGDILTGDSEGNILTWGRSPSDSKTPGRGGAKETYGIVAQAHAHEGSIFALCLRRDGTVLSGGGRDRRLVQWGPGLVALQEAEIPEHFGAVRAIAEGLGSELLVGTTKNALLRGDLAQGFSPVIQGHTDELWGLCTHPSQNRFLTCGHDRQLCLWDGESHALAWSIDLKETGLCADFHPSGAVVAVGLNTGRWLVLDTETREIVSDVIDGNEQLSVVRYSPDGLYLAIGSHDNVIYIYSVSSDGAKSSRFGRCMGHSSFITHLDWSKDGNFIMSNSGDYEILYWDVAGGCKQLKNRYESRDREWATYTCVLGFHVYGVWPDGSDGTDINSLCRSHNERVVAVADDFCKVHLFQYPCARAKAPSRMYGGHGSHVTSVRFTHDDSHLVSLGGKDASIFQWRVLGAGGAGPAPATPSRTPSLSPASSLDV.

At Met1 the chain carries N-acetylmethionine. Positions 16 to 43 form a coiled coil; sequence LQSLSQRLRVQEQEMELVKAALAEALRL. The tract at residues 50-209 is disordered; it reads PSSLQGSGTP…GGPGSRRSNY (160 aa). Polar residues predominate over residues 77-88; the sequence is TPSLVSRGTQTE. Over residues 134–145 the composition is skewed to pro residues; that stretch reads PGPPGILRPLQP. Residues 154–163 are compositionally biased toward low complexity; that stretch reads RNSSSSSSPS. Residues 174–189 are compositionally biased toward polar residues; it reads AISSANLLVRSGSTES. Residues Ser176, Ser198, and Ser204 each carry the phosphoserine modification. WD repeat units follow at residues 234-286, 295-344, 350-392, 398-434, 448-487, 504-543, 549-584, 589-626, 629-667, 674-709, 716-755, 765-823, and 830-869; these read RSLE…LYRP, GGGQ…IWDS, LQEI…VWDC, LAEI…FWNW, RKQG…TWGR, YGIV…QWGP, QEAE…LRGD, FSPV…LWDG, HALA…VLDT, SDVI…IYSV, SSRF…YWDV, RYES…LFQY, and APSR…QWRV. The disordered stretch occupies residues 876–896; sequence GPAPATPSRTPSLSPASSLDV. The segment covering 877 to 896 has biased composition (low complexity); that stretch reads PAPATPSRTPSLSPASSLDV. A Phosphothreonine; by CDK1 modification is found at Thr881. A Phosphoserine modification is found at Ser883.

Belongs to the WD repeat EMAP family. Homotrimer; self-association is mediated by the N-terminal coiled coil. Interacts with EML2 but not with EML1. Interacts (phosphorylated at Thr-881) with TUBG1, HAUS1, HAUS2, HAUS3, HAUS4, HAUS5, HAUS6, HAUS7 and HAUS8. Phosphorylation at Thr-881 during mitosis is required for interaction with TUBG1, HAUS1, HAUS2, HAUS3, HAUS4, HAUS5, HAUS6, HAUS7 and HAUS8 and their recruitment to spindle microtubules.

It is found in the cytoplasm. The protein resides in the cytoskeleton. It localises to the nucleus. Its subcellular location is the midbody. The protein localises to the spindle. Functionally, regulates mitotic spindle assembly, microtubule (MT)-kinetochore attachment and chromosome separation via recruitment of HAUS augmin-like complex and TUBG1 to the existing MTs and promoting MT-based MT nucleation. Required for proper alignnment of chromosomes during metaphase. The sequence is that of Echinoderm microtubule-associated protein-like 3 (EML3) from Homo sapiens (Human).